A 1253-amino-acid chain; its full sequence is MASTVTLEDALSNVDLLEELPLPDQQPCIEPLPSSLIYQPNFNTNFEDRNAFVTGIARYIEQATVHSSMNDMLEEGQQYAVMLYTWRCCSRAIPQVKCNEQPNRVEIYEKTVEVLEPEVNKLMNFMYFQRTAIDRFCGEVRRLCHAERRKDFVSEAYLLTLGKFINMFAVLDELKNMKCSVKNDHSAYKRAAQFLRKMSEPSSIQESQNLSMFLANHNKITQSLQQQLEVINGYDELLADIVNLCVDYYENKMYLTPSERHMLLKVMGFGLYLMDGSNSNIYKLEAKKRINLTKIDKFFKQLQVVPLFGDMQIELARYIKTSAHYEENKSRWSCTSTGSSPQYNVCEQMIQIREGHMRFISELARYSNSEVVTGSGRQDAQKTDSEYRKLFDLALQGLQLLSQWSAQIMEVYSWKLVHPTDKYSNKECPDNAEEYERATRYNYTSEEKFALVEVLAMIKGLQVLMGRMESVFNHAIRHTIYSALQDFAQVTLREPLRQAIKKKKNVVQSVLQAIRKTVCDWETGREPHNDPALRGEKDPKGGFDIKVPRRAVGPSSTQLYMVRTMLESLVADKSGSKKTLRSSLEGPTILDIEKFHRESFFYTHLLNFSETLQQCCDLSQLWFREFFLELTMGRRIQFPIEMSMPWILTDHILETKEASMMEYVLYSLDLYNDSAHYALTKFKKQFLYDEIEAEVNLCFDQFVYKLADQIFAYYKVIAGSLLLDKRLRAECKNQGANISWPSSNRYETLLKQRHVQLLGRSIDLNRLITQRVSSALYKSLELAISRFESEDLTSIMELEGLLDINRMTHKLLSKYLTLDSIDAMFREANHNVSAPYGRITLHVFWELNYDFLPNYCYNGSTNRFVRTILPFSQEFQRDKPPNAQPQYLYGSKALNLAYSSIYSLYRNFVGPPHIKAICRLLGYQGIAVVMEELLKVVKSLLQGTILQYVKTLMEVMPKICRLPRHEYGSPGILEFFHHQLKDIVEYAELKSVCFQNLREVGNALLFCLLTEQSLSQEEVCDLLHAAPFQNILPRVHVKEGERLDAKMKRLEAKYTALHLVPLIERLGTPQQIAIAREGDLLTKERLCCGLSIFEVILTRVRAYLDDPIWRGPLPSNGVMHVDECVEFHRLWSAMQFVYCIPVGAHEFTVEQCFGDGLNWAGCMIITLLGQHRRFDILDFSYHLLKVQKHDGKDEIIKSVPLKKMVDRIRKFQILNDEIFAILNKYLKSGDGENMPVEHVRCFQPPIHQSLASN.

The protein belongs to the CYFIP family.

The protein resides in the cytoplasm. It localises to the perinuclear region. The protein localises to the cell projection. Its subcellular location is the lamellipodium. It is found in the ruffle. The protein resides in the synapse. It localises to the synaptosome. In terms of biological role, involved in formation of membrane ruffles and lamellipodia protrusions and in axon outgrowth. Binds to F-actin but not to RNA. In Danio rerio (Zebrafish), this protein is Cytoplasmic FMR1-interacting protein 1 homolog.